A 459-amino-acid polypeptide reads, in one-letter code: UDP-glycosyltransferase 78D3 (459 aa).

Residues 338–340, 355–363, and 377–380 contribute to the UDP-alpha-D-glucose site; these read APQ, HGGWNSVLE, and FGDH.

It belongs to the UDP-glycosyltransferase family.

Its function is as follows. Possesses low quercetin 3-O-glucosyltransferase activity in vitro. This chain is UDP-glycosyltransferase 78D3 (UGT78D3), found in Arabidopsis thaliana (Mouse-ear cress).